The chain runs to 89 residues: uncharacterized protein (89 aa).

A helical transmembrane segment spans residues 67 to 86 (VYLSSMYICFILLAIWMTVW).

The protein localises to the membrane. This is an uncharacterized protein from Bacillus subtilis (strain 168).